The following is a 298-amino-acid chain: Phosphatidylserine decarboxylase proenzyme (298 aa).

Catalysis depends on charge relay system; for autoendoproteolytic cleavage activity residues D113, H169, and S256. The active-site Schiff-base intermediate with substrate; via pyruvic acid; for decarboxylase activity is the S256. S256 is modified (pyruvic acid (Ser); by autocatalysis).

It belongs to the phosphatidylserine decarboxylase family. PSD-B subfamily. Prokaryotic type II sub-subfamily. In terms of assembly, heterodimer of a large membrane-associated beta subunit and a small pyruvoyl-containing alpha subunit. The cofactor is pyruvate. Is synthesized initially as an inactive proenzyme. Formation of the active enzyme involves a self-maturation process in which the active site pyruvoyl group is generated from an internal serine residue via an autocatalytic post-translational modification. Two non-identical subunits are generated from the proenzyme in this reaction, and the pyruvate is formed at the N-terminus of the alpha chain, which is derived from the carboxyl end of the proenzyme. The autoendoproteolytic cleavage occurs by a canonical serine protease mechanism, in which the side chain hydroxyl group of the serine supplies its oxygen atom to form the C-terminus of the beta chain, while the remainder of the serine residue undergoes an oxidative deamination to produce ammonia and the pyruvoyl prosthetic group on the alpha chain. During this reaction, the Ser that is part of the protease active site of the proenzyme becomes the pyruvoyl prosthetic group, which constitutes an essential element of the active site of the mature decarboxylase.

Its subcellular location is the cell membrane. The catalysed reaction is a 1,2-diacyl-sn-glycero-3-phospho-L-serine + H(+) = a 1,2-diacyl-sn-glycero-3-phosphoethanolamine + CO2. It participates in phospholipid metabolism; phosphatidylethanolamine biosynthesis; phosphatidylethanolamine from CDP-diacylglycerol: step 2/2. Its function is as follows. Catalyzes the formation of phosphatidylethanolamine (PtdEtn) from phosphatidylserine (PtdSer). The chain is Phosphatidylserine decarboxylase proenzyme from Desulfitobacterium hafniense (strain Y51).